The sequence spans 247 residues: Triosephosphate isomerase (247 aa).

Asn-10 and Lys-12 together coordinate substrate. His-94 serves as the catalytic Electrophile. The active-site Proton acceptor is Glu-164.

Belongs to the triosephosphate isomerase family. In terms of assembly, homodimer.

The protein localises to the cytoplasm. It catalyses the reaction D-glyceraldehyde 3-phosphate = dihydroxyacetone phosphate. The enzyme catalyses dihydroxyacetone phosphate = methylglyoxal + phosphate. The protein operates within carbohydrate biosynthesis; gluconeogenesis. It participates in carbohydrate degradation; glycolysis; D-glyceraldehyde 3-phosphate from glycerone phosphate: step 1/1. Functionally, triosephosphate isomerase is an extremely efficient metabolic enzyme that catalyzes the interconversion between dihydroxyacetone phosphate (DHAP) and D-glyceraldehyde-3-phosphate (G3P) in glycolysis and gluconeogenesis. In terms of biological role, it is also responsible for the non-negligible production of methylglyoxal a reactive cytotoxic side-product that modifies and can alter proteins, DNA and lipids. In Latimeria chalumnae (Coelacanth), this protein is Triosephosphate isomerase.